A 363-amino-acid polypeptide reads, in one-letter code: Pyrimidine monooxygenase RutA (363 aa).

FMN contacts are provided by residues 49 to 50 (IK), Asn115, Glu124, 140 to 141 (RY), and Ser190.

It belongs to the NtaA/SnaA/DszA monooxygenase family. RutA subfamily.

It catalyses the reaction uracil + FMNH2 + NADH + O2 = (Z)-3-ureidoacrylate + FMN + NAD(+) + H2O + H(+). It carries out the reaction thymine + FMNH2 + NADH + O2 = (Z)-2-methylureidoacrylate + FMN + NAD(+) + H2O + H(+). Catalyzes the pyrimidine ring opening between N-3 and C-4 by an unusual flavin hydroperoxide-catalyzed mechanism, adding oxygen atoms in the process to yield ureidoacrylate peracid, that immediately reacts with FMN forming ureidoacrylate and FMN-N(5)-oxide. The FMN-N(5)-oxide reacts spontaneously with NADH to produce FMN. Requires the flavin reductase RutF to regenerate FMN in vivo. This chain is Pyrimidine monooxygenase RutA, found in Klebsiella pneumoniae subsp. pneumoniae (strain ATCC 700721 / MGH 78578).